The following is a 286-amino-acid chain: Shikimate dehydrogenase (NADP(+)) (286 aa).

Residues 20–22 and Ser-67 contribute to the shikimate site; that span reads SLS. The active-site Proton acceptor is the Lys-71. Residues Asn-92 and Asp-107 each contribute to the shikimate site. NADP(+) contacts are provided by residues 131–135 and Ala-230; that span reads GGGGA. Tyr-232 is a binding site for shikimate. Gly-253 contributes to the NADP(+) binding site.

This sequence belongs to the shikimate dehydrogenase family. As to quaternary structure, homodimer.

The enzyme catalyses shikimate + NADP(+) = 3-dehydroshikimate + NADPH + H(+). It functions in the pathway metabolic intermediate biosynthesis; chorismate biosynthesis; chorismate from D-erythrose 4-phosphate and phosphoenolpyruvate: step 4/7. Its function is as follows. Involved in the biosynthesis of the chorismate, which leads to the biosynthesis of aromatic amino acids. Catalyzes the reversible NADPH linked reduction of 3-dehydroshikimate (DHSA) to yield shikimate (SA). The polypeptide is Shikimate dehydrogenase (NADP(+)) (Lactococcus lactis subsp. lactis (strain IL1403) (Streptococcus lactis)).